A 183-amino-acid polypeptide reads, in one-letter code: uncharacterized protein (183 aa).

A run of 4 helical transmembrane segments spans residues 26–48, 72–91, 104–121, and 125–147; these read FVAI…IIFY, LLVR…KVFI, IIEA…LIVF, and FTFW…YVLL.

The protein resides in the cell membrane. This is an uncharacterized protein from Aquifex aeolicus (strain VF5).